We begin with the raw amino-acid sequence, 238 residues long: Ankyrin repeat domain-containing protein 49 (238 aa).

Residue serine 48 is modified to Phosphoserine. ANK repeat units follow at residues 77–105 (LLWA…TRDE), 106–135 (DKYT…DVHA), 139–168 (DGWT…DVNA), and 172–205 (GLLT…GLKN).

Its subcellular location is the nucleus. Its function is as follows. May have a role in spermatogenesis where it promotes autophagy in response to serum starvation, via the NF-kappaB pathway. The protein is Ankyrin repeat domain-containing protein 49 (ANKRD49) of Bos taurus (Bovine).